Consider the following 391-residue polypeptide: Imidazolonepropionase (391 aa).

Fe(3+) contacts are provided by H72 and H74. Zn(2+) contacts are provided by H72 and H74. Residues R81, Y139, and H166 each coordinate 4-imidazolone-5-propanoate. Y139 is an N-formimidoyl-L-glutamate binding site. A Fe(3+)-binding site is contributed by H229. H229 is a binding site for Zn(2+). Q232 contacts 4-imidazolone-5-propanoate. D303 contacts Fe(3+). D303 provides a ligand contact to Zn(2+). N-formimidoyl-L-glutamate-binding residues include N305 and G307. S308 is a 4-imidazolone-5-propanoate binding site.

It belongs to the metallo-dependent hydrolases superfamily. HutI family. It depends on Zn(2+) as a cofactor. The cofactor is Fe(3+).

The protein resides in the cytoplasm. It catalyses the reaction 4-imidazolone-5-propanoate + H2O = N-formimidoyl-L-glutamate. It participates in amino-acid degradation; L-histidine degradation into L-glutamate; N-formimidoyl-L-glutamate from L-histidine: step 3/3. Its function is as follows. Catalyzes the hydrolytic cleavage of the carbon-nitrogen bond in imidazolone-5-propanoate to yield N-formimidoyl-L-glutamate. It is the third step in the universal histidine degradation pathway. The sequence is that of Imidazolonepropionase from Streptomyces coelicolor (strain ATCC BAA-471 / A3(2) / M145).